The primary structure comprises 346 residues: Putative alpha/beta hydrolase R526 (346 aa).

The protein belongs to the AB hydrolase 3 family.

The protein localises to the virion. In Acanthamoeba polyphaga mimivirus (APMV), this protein is Putative alpha/beta hydrolase R526.